The following is a 757-amino-acid chain: 5-methyltetrahydropteroyltriglutamate--homocysteine methyltransferase (757 aa).

5-methyltetrahydropteroyltri-L-glutamate contacts are provided by residues 17–20 and Lys-117; that span reads RELK. Residues 432–434 and Glu-485 contribute to the L-homocysteine site; that span reads IGS. Residues 432-434 and Glu-485 each bind L-methionine; that span reads IGS. Residues 516 to 517 and Trp-562 contribute to the 5-methyltetrahydropteroyltri-L-glutamate site; that span reads RC. Asp-600 is an L-homocysteine binding site. Asp-600 is an L-methionine binding site. Glu-606 is a binding site for 5-methyltetrahydropteroyltri-L-glutamate. 3 residues coordinate Zn(2+): His-642, Cys-644, and Glu-666. The active-site Proton donor is the His-695. Position 727 (Cys-727) interacts with Zn(2+).

Belongs to the vitamin-B12 independent methionine synthase family. Zn(2+) serves as cofactor.

The catalysed reaction is 5-methyltetrahydropteroyltri-L-glutamate + L-homocysteine = tetrahydropteroyltri-L-glutamate + L-methionine. It functions in the pathway amino-acid biosynthesis; L-methionine biosynthesis via de novo pathway; L-methionine from L-homocysteine (MetE route): step 1/1. Catalyzes the transfer of a methyl group from 5-methyltetrahydrofolate to homocysteine resulting in methionine formation. The sequence is that of 5-methyltetrahydropteroyltriglutamate--homocysteine methyltransferase from Erwinia tasmaniensis (strain DSM 17950 / CFBP 7177 / CIP 109463 / NCPPB 4357 / Et1/99).